The chain runs to 272 residues: Shikimate dehydrogenase (NADP(+)) (272 aa).

Shikimate contacts are provided by residues 14–16 (SKS) and Thr-61. Residue Lys-65 is the Proton acceptor of the active site. Residue Glu-77 participates in NADP(+) binding. The shikimate site is built by Asn-86 and Asp-102. NADP(+) contacts are provided by residues 126-130 (GAGGA), 149-154 (NRTASR), and Met-213. Tyr-215 serves as a coordination point for shikimate. Gly-237 is an NADP(+) binding site.

The protein belongs to the shikimate dehydrogenase family. In terms of assembly, homodimer.

It catalyses the reaction shikimate + NADP(+) = 3-dehydroshikimate + NADPH + H(+). It functions in the pathway metabolic intermediate biosynthesis; chorismate biosynthesis; chorismate from D-erythrose 4-phosphate and phosphoenolpyruvate: step 4/7. In terms of biological role, involved in the biosynthesis of the chorismate, which leads to the biosynthesis of aromatic amino acids. Catalyzes the reversible NADPH linked reduction of 3-dehydroshikimate (DHSA) to yield shikimate (SA). This is Shikimate dehydrogenase (NADP(+)) from Salmonella enteritidis PT4 (strain P125109).